The sequence spans 495 residues: MEFLVKSVRPETLKTATLVLAVGEGRKLGASAKAVDDATGGAISAVLKRGDLAGKVGQTLLLQSLPNLKAERVLLVGAGKERELGDRQYRKLASAVLSTLKGLAGADAALALGDLAVKGRGAHAKARLLVETLADGLYVFDRYKSQKAEPLKLKKLTLLADKADSAAVEQGSKEAQAIANGMALTRDLGNLPPNVCHPTFLGEQAKGLAKEFKSLKVEVLDEKKLRELGMGSFLAVAQGSDQPPRLIILQYNGAKKDQAPHVLVGKGITFDTGGISLKPGLGMDEMKFDMCGAASVFGTFRAVLELQLPINLVGLLACAENMPSGGATRPGDIVTTMSGQTVEILNTDAEGRLVLCDALTYAERFKPQSVIDIATLTGACIVALGSNTSGLMGNNEALVRQLLKAGEFADDRAWQLPLFDEYQEQLDSPFADIANIGGPKAGTITAGCFLSRFAKKYHWAHLDIAGTAWISGGKDKGATGRPVPLLTQYLLERAK.

Lys266 and Asp271 together coordinate Mn(2+). Lys278 is a catalytic residue. Mn(2+) is bound by residues Asp289, Asp348, and Glu350. Arg352 is a catalytic residue.

This sequence belongs to the peptidase M17 family. Requires Mn(2+) as cofactor.

The protein resides in the cytoplasm. The catalysed reaction is Release of an N-terminal amino acid, Xaa-|-Yaa-, in which Xaa is preferably Leu, but may be other amino acids including Pro although not Arg or Lys, and Yaa may be Pro. Amino acid amides and methyl esters are also readily hydrolyzed, but rates on arylamides are exceedingly low.. It carries out the reaction Release of an N-terminal amino acid, preferentially leucine, but not glutamic or aspartic acids.. Its function is as follows. Presumably involved in the processing and regular turnover of intracellular proteins. Catalyzes the removal of unsubstituted N-terminal amino acids from various peptides. The polypeptide is Probable cytosol aminopeptidase (Pseudomonas aeruginosa (strain UCBPP-PA14)).